A 275-amino-acid chain; its full sequence is NH(3)-dependent NAD(+) synthetase (275 aa).

46–53 is an ATP binding site; sequence GISGGQDS. Position 52 (Asp-52) interacts with Mg(2+). A deamido-NAD(+)-binding site is contributed by Arg-140. Thr-160 provides a ligand contact to ATP. Residue Glu-165 coordinates Mg(2+). Residues Lys-173 and Asp-180 each contribute to the deamido-NAD(+) site. 2 residues coordinate ATP: Lys-189 and Thr-211. 260–261 is a deamido-NAD(+) binding site; sequence HK.

The protein belongs to the NAD synthetase family. Homodimer.

It carries out the reaction deamido-NAD(+) + NH4(+) + ATP = AMP + diphosphate + NAD(+) + H(+). The protein operates within cofactor biosynthesis; NAD(+) biosynthesis; NAD(+) from deamido-NAD(+) (ammonia route): step 1/1. In terms of biological role, catalyzes the ATP-dependent amidation of deamido-NAD to form NAD. Uses ammonia as a nitrogen source. This is NH(3)-dependent NAD(+) synthetase from Escherichia fergusonii (strain ATCC 35469 / DSM 13698 / CCUG 18766 / IAM 14443 / JCM 21226 / LMG 7866 / NBRC 102419 / NCTC 12128 / CDC 0568-73).